The following is a 249-amino-acid chain: Enolase-phosphatase E1 (249 aa).

Belongs to the HAD-like hydrolase superfamily. MasA/MtnC family. As to quaternary structure, monomer. It depends on Mg(2+) as a cofactor.

It catalyses the reaction 5-methylsulfanyl-2,3-dioxopentyl phosphate + H2O = 1,2-dihydroxy-5-(methylsulfanyl)pent-1-en-3-one + phosphate. It participates in amino-acid biosynthesis; L-methionine biosynthesis via salvage pathway; L-methionine from S-methyl-5-thio-alpha-D-ribose 1-phosphate: step 3/6. Its pathway is amino-acid biosynthesis; L-methionine biosynthesis via salvage pathway; L-methionine from S-methyl-5-thio-alpha-D-ribose 1-phosphate: step 4/6. In terms of biological role, bifunctional enzyme that catalyzes the enolization of 2,3-diketo-5-methylthiopentyl-1-phosphate (DK-MTP-1-P) into the intermediate 2-hydroxy-3-keto-5-methylthiopentenyl-1-phosphate (HK-MTPenyl-1-P), which is then dephosphorylated to form the acireductone 1,2-dihydroxy-3-keto-5-methylthiopentene (DHK-MTPene). This Synechococcus sp. (strain CC9605) protein is Enolase-phosphatase E1.